The following is a 391-amino-acid chain: Putative gustatory receptor 98a (391 aa).

Over 1 to 31 the chain is Cytoplasmic; it reads MEQMSGELHAASLLYMRRLMKCLGMLPFGQN. Residues 32-52 traverse the membrane as a helical segment; that stretch reads LFSKGFCYVLLFVSLGFSSYW. The Extracellular portion of the chain corresponds to 53–74; it reads RFSFDYEFDYDFLNDRFSSTID. Residues 75 to 95 form a helical membrane-spanning segment; that stretch reads LSNFVALVLGHAIIVLELLWG. Topologically, residues 96–128 are cytoplasmic; that stretch reads NCSKDVDRQLQAIHSQIKLQLGTSNSTDRVRRY. Residues 129–149 form a helical membrane-spanning segment; sequence CNWIYGSLIIRWLIFIVVTIY. Residues 150–173 are Extracellular-facing; the sequence is SNRALTINATYSELVFLARFSEFT. The N-linked (GlcNAc...) asparagine glycan is linked to Asn-157. A helical membrane pass occupies residues 174–194; that stretch reads LYCAVILFIYQELIVGGSNVL. Residues 195–239 are Cytoplasmic-facing; that stretch reads DELYRTRYEMWSIRRLSLQKLAKLQAIHNSLWQAIRCLECYFQLS. Residues 240 to 260 form a helical membrane-spanning segment; sequence LITLLMKFFIDTSALPYWLYL. Topologically, residues 261–272 are extracellular; sequence SRVEHTRVAVQH. The helical transmembrane segment at 273–293 threads the bilayer; it reads YVATVECIKLLEIVVPCYLCT. Over 294 to 347 the chain is Cytoplasmic; that stretch reads RCDAMQRKFLSMFYTVTTDRRSSQLNAALRSLNLQLSQEKYKFSAGGMVDINTE. A helical membrane pass occupies residues 348 to 368; that stretch reads MLGKFFFGMISYIVICIQFSI. Residues 369-391 lie on the Extracellular side of the membrane; sequence NFRAKKMSNEQMSQNITSTSAPI. N-linked (GlcNAc...) asparagine glycosylation occurs at Asn-383.

It belongs to the insect chemoreceptor superfamily. Gustatory receptor (GR) family. Gr2a subfamily.

The protein localises to the cell membrane. In terms of biological role, probable gustatory receptor which mediates acceptance or avoidance behavior, depending on its substrates. The protein is Putative gustatory receptor 98a (Gr98a) of Drosophila melanogaster (Fruit fly).